Here is a 394-residue protein sequence, read N- to C-terminus: Phosphopentomutase (394 aa).

Residues D13, D286, H291, D327, H328, and H339 each contribute to the Mn(2+) site.

Belongs to the phosphopentomutase family. Requires Mn(2+) as cofactor.

It localises to the cytoplasm. The enzyme catalyses 2-deoxy-alpha-D-ribose 1-phosphate = 2-deoxy-D-ribose 5-phosphate. It carries out the reaction alpha-D-ribose 1-phosphate = D-ribose 5-phosphate. It participates in carbohydrate degradation; 2-deoxy-D-ribose 1-phosphate degradation; D-glyceraldehyde 3-phosphate and acetaldehyde from 2-deoxy-alpha-D-ribose 1-phosphate: step 1/2. Functionally, isomerase that catalyzes the conversion of deoxy-ribose 1-phosphate (dRib-1-P) and ribose 1-phosphate (Rib-1-P) to deoxy-ribose 5-phosphate (dRib-5-P) and ribose 5-phosphate (Rib-5-P), respectively. The sequence is that of Phosphopentomutase from Bacillus cereus (strain G9842).